A 291-amino-acid chain; its full sequence is ATP phosphoribosyltransferase (291 aa).

It belongs to the ATP phosphoribosyltransferase family. Long subfamily. The cofactor is Mg(2+).

It localises to the cytoplasm. It catalyses the reaction 1-(5-phospho-beta-D-ribosyl)-ATP + diphosphate = 5-phospho-alpha-D-ribose 1-diphosphate + ATP. Its pathway is amino-acid biosynthesis; L-histidine biosynthesis; L-histidine from 5-phospho-alpha-D-ribose 1-diphosphate: step 1/9. Its activity is regulated as follows. Feedback inhibited by histidine. In terms of biological role, catalyzes the condensation of ATP and 5-phosphoribose 1-diphosphate to form N'-(5'-phosphoribosyl)-ATP (PR-ATP). Has a crucial role in the pathway because the rate of histidine biosynthesis seems to be controlled primarily by regulation of HisG enzymatic activity. The protein is ATP phosphoribosyltransferase of Geotalea daltonii (strain DSM 22248 / JCM 15807 / FRC-32) (Geobacter daltonii).